The following is a 625-amino-acid chain: tRNA uridine 5-carboxymethylaminomethyl modification enzyme MnmG (625 aa).

14-19 contacts FAD; sequence GAGHAG. 273-287 is a binding site for NAD(+); sequence GPRYCPSIEDKIVRF.

The protein belongs to the MnmG family. As to quaternary structure, homodimer. Heterotetramer of two MnmE and two MnmG subunits. Requires FAD as cofactor.

The protein resides in the cytoplasm. Functionally, NAD-binding protein involved in the addition of a carboxymethylaminomethyl (cmnm) group at the wobble position (U34) of certain tRNAs, forming tRNA-cmnm(5)s(2)U34. The protein is tRNA uridine 5-carboxymethylaminomethyl modification enzyme MnmG of Clostridium botulinum (strain Okra / Type B1).